Consider the following 138-residue polypeptide: ATP synthase epsilon chain (138 aa).

This sequence belongs to the ATPase epsilon chain family. As to quaternary structure, F-type ATPases have 2 components, CF(1) - the catalytic core - and CF(0) - the membrane proton channel. CF(1) has five subunits: alpha(3), beta(3), gamma(1), delta(1), epsilon(1). CF(0) has three main subunits: a, b and c.

The protein localises to the cell inner membrane. Functionally, produces ATP from ADP in the presence of a proton gradient across the membrane. The protein is ATP synthase epsilon chain of Delftia acidovorans (strain DSM 14801 / SPH-1).